Reading from the N-terminus, the 502-residue chain is ATP synthase subunit alpha (502 aa).

Gly169–Thr176 is a binding site for ATP.

It belongs to the ATPase alpha/beta chains family. As to quaternary structure, F-type ATPases have 2 components, CF(1) - the catalytic core - and CF(0) - the membrane proton channel. CF(1) has five subunits: alpha(3), beta(3), gamma(1), delta(1), epsilon(1). CF(0) has three main subunits: a(1), b(2) and c(9-12). The alpha and beta chains form an alternating ring which encloses part of the gamma chain. CF(1) is attached to CF(0) by a central stalk formed by the gamma and epsilon chains, while a peripheral stalk is formed by the delta and b chains.

The protein localises to the cell inner membrane. It carries out the reaction ATP + H2O + 4 H(+)(in) = ADP + phosphate + 5 H(+)(out). Functionally, produces ATP from ADP in the presence of a proton gradient across the membrane. The alpha chain is a regulatory subunit. This Kosmotoga olearia (strain ATCC BAA-1733 / DSM 21960 / TBF 19.5.1) protein is ATP synthase subunit alpha.